The chain runs to 867 residues: Nuclear body protein SP140 (867 aa).

The region spanning valine 22–tyrosine 138 is the HSR domain. Disordered stretches follow at residues threonine 260–glutamine 341, threonine 365–leucine 432, and isoleucine 486–aspartate 580. The segment covering lysine 268–aspartate 301 has biased composition (basic and acidic residues). 2 stretches are compositionally biased toward acidic residues: residues glutamate 323–glutamine 341 and glutamate 384–aspartate 397. The segment covering alanine 404–serine 416 has biased composition (low complexity). Basic residues-rich tracts occupy residues lysine 494 to methionine 512 and glutamine 567 to lysine 577. The Nuclear localization signal motif lies at proline 495 to arginine 514. The region spanning aspartate 580 to proline 661 is the SAND domain. The PHD-type zinc-finger motif lies at leucine 690–lysine 736. Threonine 726 is subject to Phosphothreonine. One can recognise a Bromo domain in the interval glutamine 754–valine 857.

Interacts with PIN1. Post-translationally, phosphorylation at Thr-726 promotes binding of PIN1 and subsequent isomerization of Pro-727. As to expression, high levels in spleen and peripheral blood leukocytes, much lower levels in tonsils, thymus, prostate, ovary, small intestine, and colon. Very low levels in heart, brain, placenta, lung, liver, skeletal muscle, kidney, and pancreas. Not detected in brain, liver and muscle.

The protein localises to the nucleus. It is found in the PML body. The protein resides in the cytoplasm. Functionally, component of the nuclear body, also known as nuclear domain 10, PML oncogenic domain, and KR body. May be involved in the pathogenesis of acute promyelocytic leukemia and viral infection. May play a role in chromatin-mediated regulation of gene expression although it does not bind to histone H3 tails. This Homo sapiens (Human) protein is Nuclear body protein SP140.